Here is a 103-residue protein sequence, read N- to C-terminus: Alpha-ketoglutarate dehydrogenase component 4 (103 aa).

Position 1 is an N-acetylmethionine (methionine 1). Lysine 5 bears the N6-succinyllysine mark. The disordered stretch occupies residues isoleucine 23–proline 70. The segment covering serine 47 to serine 61 has biased composition (low complexity). 2 positions are modified to phosphoserine: serine 61 and serine 90.

The protein belongs to the alpha-ketoglutarate dehydrogenase component 4 family. Component of the 2-oxoglutarate dehydrogenase complex (OGDHC), composed of OGDH (2-oxoglutarate dehydrogenase; also called E1 subunit), DLST (dihydrolipoamide succinyltransferase; also called E2 subunit) and DLD (dihydrolipoamide dehydrogenase; also called E3 subunit), and the assembly factor KGD4. Within OGDHC complex, interacts (via N-terminus) with E3 subunit and (via C-terminus) with E2 subunit.

The protein resides in the mitochondrion. In terms of biological role, molecular adapter that is necessary to form a stable 2-oxoglutarate dehydrogenase enzyme complex (OGDHC). Enables the specific recruitment of E3 subunit to E2 subunit in the 2-oxoglutarate dehydrogenase complex (OGDHC). The chain is Alpha-ketoglutarate dehydrogenase component 4 (KGD4) from Bos taurus (Bovine).